A 39-amino-acid polypeptide reads, in one-letter code: Photosystem II reaction center protein J (39 aa).

Residues 7–27 form a helical membrane-spanning segment; it reads IPLWLVGLVGGLAVITMLSLF.

This sequence belongs to the PsbJ family. In terms of assembly, PSII is composed of 1 copy each of membrane proteins PsbA, PsbB, PsbC, PsbD, PsbE, PsbF, PsbH, PsbI, PsbJ, PsbK, PsbL, PsbM, PsbT, PsbX, PsbY, PsbZ, Psb30/Ycf12, at least 3 peripheral proteins of the oxygen-evolving complex and a large number of cofactors. It forms dimeric complexes.

The protein resides in the plastid. It localises to the chloroplast thylakoid membrane. Its function is as follows. One of the components of the core complex of photosystem II (PSII). PSII is a light-driven water:plastoquinone oxidoreductase that uses light energy to abstract electrons from H(2)O, generating O(2) and a proton gradient subsequently used for ATP formation. It consists of a core antenna complex that captures photons, and an electron transfer chain that converts photonic excitation into a charge separation. The protein is Photosystem II reaction center protein J of Trieres chinensis (Marine centric diatom).